Consider the following 104-residue polypeptide: uncharacterized protein (104 aa).

This is an uncharacterized protein from Mycobacterium tuberculosis (strain ATCC 25618 / H37Rv).